Reading from the N-terminus, the 168-residue chain is tRNA-splicing endonuclease subunit Sen15 (168 aa).

The interval 1–32 (MEERSDSEPTPGCSGPGPAPVRDGGGAHTWAP) is disordered. Serine 7 and serine 165 each carry phosphoserine.

It belongs to the SEN15 family. As to quaternary structure, homodimer. tRNA splicing endonuclease is a heterotetramer composed of TSEN2, TSEN15, TSEN34/LENG5 and TSEN54. tRNA splicing endonuclease complex also contains proteins of the pre-mRNA 3' end processing machinery such as CLP1, CPSF1, CPSF4 and CSTF2.

The protein localises to the nucleus. It localises to the nucleolus. In terms of biological role, non-catalytic subunit of the tRNA-splicing endonuclease complex, a complex responsible for identification and cleavage of the splice sites in pre-tRNA. It cleaves pre-tRNA at the 5' and 3' splice sites to release the intron. The products are an intron and two tRNA half-molecules bearing 2',3' cyclic phosphate and 5'-OH termini. There are no conserved sequences at the splice sites, but the intron is invariably located at the same site in the gene, placing the splice sites an invariant distance from the constant structural features of the tRNA body. The tRNA splicing endonuclease is also involved in mRNA processing via its association with pre-mRNA 3'-end processing factors, establishing a link between pre-tRNA splicing and pre-mRNA 3'-end formation, suggesting that the endonuclease subunits function in multiple RNA-processing events. In Mus musculus (Mouse), this protein is tRNA-splicing endonuclease subunit Sen15 (Tsen15).